A 23-amino-acid chain; its full sequence is Septenin 2d (23 aa).

In terms of tissue distribution, expressed in skin glands.

It is found in the secreted. Functionally, may act as an antimicrobial peptide. The sequence is that of Septenin 2d from Osteopilus septentrionalis (Cuban treefrog).